Reading from the N-terminus, the 324-residue chain is uncharacterized protein (324 aa).

The next 9 membrane-spanning stretches (helical) occupy residues 34-54, 76-96, 103-123, 127-147, 158-178, 198-218, 243-263, 275-295, and 297-317; these read MAVL…FYVL, VFMA…NVGL, IYQM…TTLL, IGQL…IVGY, PILG…QFTI, GTYG…FIGS, YVIS…GLAI, LDIA…MESF, and LLQF…HSII.

Its subcellular location is the membrane. This is an uncharacterized protein from Schizosaccharomyces pombe (strain 972 / ATCC 24843) (Fission yeast).